We begin with the raw amino-acid sequence, 61 residues long: Small ribosomal subunit protein uS14 (61 aa).

4 residues coordinate Zn(2+): Cys-24, Cys-27, Cys-40, and Cys-43.

This sequence belongs to the universal ribosomal protein uS14 family. Zinc-binding uS14 subfamily. Part of the 30S ribosomal subunit. Contacts proteins S3 and S10. Zn(2+) serves as cofactor.

Its function is as follows. Binds 16S rRNA, required for the assembly of 30S particles and may also be responsible for determining the conformation of the 16S rRNA at the A site. This chain is Small ribosomal subunit protein uS14, found in Bifidobacterium longum (strain DJO10A).